The primary structure comprises 537 residues: Methylmalonate-semialdehyde/malonate-semialdehyde dehydrogenase [acylating], mitochondrial (537 aa).

The transit peptide at 1–34 (MAAVAVAAAAAALRARILQVSSKVNSSWQPASSF) directs the protein to the mitochondrion. An N6-acetyllysine; alternate mark is found at lysine 49, lysine 54, lysine 57, and lysine 78. N6-succinyllysine; alternate occurs at positions 49, 54, 57, and 78. N6-acetyllysine is present on lysine 89. An N6-acetyllysine; alternate mark is found at lysine 119 and lysine 131. An N6-succinyllysine; alternate mark is found at lysine 119 and lysine 131. NAD(+) contacts are provided by alanine 185, phenylalanine 187, lysine 211, glutamate 214, arginine 215, and serine 264. At serine 264 the chain carries Phosphoserine. Lysine 300 is modified (N6-acetyllysine). The active-site Nucleophile is cysteine 319. N6-acetyllysine is present on residues lysine 332 and lysine 333. N6-acetyllysine; alternate occurs at positions 366 and 378. N6-succinyllysine; alternate occurs at positions 366 and 378. Position 382 is a phosphoserine (serine 382). An N6-succinyllysine modification is found at lysine 393. Glutamate 419 serves as a coordination point for NAD(+). Position 502 is an N6-acetyllysine (lysine 502). At lysine 519 the chain carries N6-succinyllysine.

Belongs to the aldehyde dehydrogenase family. Homodimer. In terms of processing, the N-terminus is blocked.

It is found in the mitochondrion. It catalyses the reaction 2-methyl-3-oxopropanoate + NAD(+) + CoA + H2O = propanoyl-CoA + hydrogencarbonate + NADH + H(+). It carries out the reaction 3-oxopropanoate + NAD(+) + CoA + H2O = hydrogencarbonate + acetyl-CoA + NADH + H(+). The catalysed reaction is (R)-2-methyl-3-oxopropanoate + NAD(+) + CoA + H2O = propanoyl-CoA + hydrogencarbonate + NADH + H(+). The enzyme catalyses (S)-2-methyl-3-oxopropanoate + NAD(+) + CoA + H2O = propanoyl-CoA + hydrogencarbonate + NADH + H(+). In terms of biological role, malonate and methylmalonate semialdehyde dehydrogenase involved in the catabolism of valine, thymine, and compounds catabolized by way of beta-alanine, including uracil and cytidine. This chain is Methylmalonate-semialdehyde/malonate-semialdehyde dehydrogenase [acylating], mitochondrial (ALDH6A1), found in Bos taurus (Bovine).